The following is a 497-amino-acid chain: 4,4'-diaponeurosporene oxygenase (497 aa).

7–19 serves as a coordination point for FAD; sequence VIGGGLGGISAAI.

It belongs to the carotenoid/retinoid oxidoreductase family. CrtP subfamily. The cofactor is FAD.

It carries out the reaction all-trans-4,4'-diaponeurosporene + 2 AH2 + 2 O2 = 4,4'-diaponeurosporenal + 2 A + 3 H2O. It functions in the pathway carotenoid biosynthesis; staphyloxanthin biosynthesis; staphyloxanthin from farnesyl diphosphate: step 3/5. Functionally, involved in the biosynthesis of the yellow-orange carotenoid staphyloxanthin, which plays a role in the virulence via its protective function against oxidative stress. Catalyzes the oxidation of the terminal methyl side group of 4,4'-diaponeurosporene to form 4,4'-diaponeurosporen-4-al. The C40 carotenoid lycopene is a poor substrate. The protein is 4,4'-diaponeurosporene oxygenase of Staphylococcus aureus (strain Mu50 / ATCC 700699).